Here is a 113-residue protein sequence, read N- to C-terminus: Nucleoid-associated protein Synpcc7942_0464 (113 aa).

This sequence belongs to the YbaB/EbfC family. In terms of assembly, homodimer.

Its subcellular location is the cytoplasm. It is found in the nucleoid. Binds to DNA and alters its conformation. May be involved in regulation of gene expression, nucleoid organization and DNA protection. This is Nucleoid-associated protein Synpcc7942_0464 from Synechococcus elongatus (strain ATCC 33912 / PCC 7942 / FACHB-805) (Anacystis nidulans R2).